We begin with the raw amino-acid sequence, 518 residues long: MELISTINLLTIVLLLFVVSKIWKACWILLLRPLMLSKRFKKQGISGPKYKILYGNLSEIKKMKKEADLCVLDPNSNDIFPRVFPQYHQWMSQYGDTFLFWTGTKPTIYISNHELAKQVLSSKFGFTIIPVKRPEVFILFGKGLSFIQGDDWIRHRRILNPAFSMDRLKAMTQPMGDCTLRIFEEWRKQRRNGEVLIKIEISKEFHKLTADIIATTAFGSSYAEGIELCRSQTELEKYYISSLTNVFIPGTQYLPTPTNLKLWELHKKVKNSIKRIIDSRLKSKCKTYGYGDDLLGVMLTAAKSNEYERKMRMDEIIEECKNFYYAGQGTTSILLTWTTMLLSLHQGWQEKLREEVFNECGKDKIPDTDTFSKLKLMNMVLMESLRLYGPVIKISREATQDMKVGHLEIPKGTSIIIPLLKMHRDKAIWGEDAEQFNPLRFENGISQATIHPNALLPFSIGPRACIAKNFAMVEAKTVLTMILQQFQLSLSPEYKHTPVDHFDLFPQYGLPVMLHPLG.

A helical membrane pass occupies residues 3-23; sequence LISTINLLTIVLLLFVVSKIW. Heme is bound at residue C465.

Belongs to the cytochrome P450 family. Heme serves as cofactor. As to expression, highly expressed in rosette leaves and siliques, and at lower levels in flowers.

It is found in the membrane. In terms of biological role, plays a role in abscisic acid (ABA) and salt stress response. May regulate the salt stress response independently of well-characterized pathways. Does not function as cytokinin hydroxylase in yeast heterologous system. This is Cytochrome P450 709B3 from Arabidopsis thaliana (Mouse-ear cress).